The primary structure comprises 500 residues: ATP synthase subunit beta (500 aa).

155 to 162 is a binding site for ATP; that stretch reads GGAGVGKT.

This sequence belongs to the ATPase alpha/beta chains family. F-type ATPases have 2 components, CF(1) - the catalytic core - and CF(0) - the membrane proton channel. CF(1) has five subunits: alpha(3), beta(3), gamma(1), delta(1), epsilon(1). CF(0) has three main subunits: a(1), b(2) and c(9-12). The alpha and beta chains form an alternating ring which encloses part of the gamma chain. CF(1) is attached to CF(0) by a central stalk formed by the gamma and epsilon chains, while a peripheral stalk is formed by the delta and b chains.

Its subcellular location is the cell inner membrane. The enzyme catalyses ATP + H2O + 4 H(+)(in) = ADP + phosphate + 5 H(+)(out). Produces ATP from ADP in the presence of a proton gradient across the membrane. The catalytic sites are hosted primarily by the beta subunits. This Azobacteroides pseudotrichonymphae genomovar. CFP2 protein is ATP synthase subunit beta.